A 255-amino-acid polypeptide reads, in one-letter code: MARSVVLVDCHWHLTASEFDHDIGSVLEDAKTIGLCALVAVAEHSGEFEKVIELSRRNAGLVFPCLGVHPVQGSATGPQRSATLQDVEDALPMIEQYRDELVAIGEVGLDFTPRIACTDDQKEEQRNVHSRSAGRPTINLLRDQGAEKVLLHAFDGKPSVAMEGVKAGFYFSIPPSIIRSEQQKLVKQLPLENMCLETDSPALGPEKQVRNEPKNILHSAEYIARVKGISLEEVIEITTKNALKVFPRLCHVLPK.

Zn(2+) contacts are provided by His11, His13, Glu106, His129, His152, and Asp199.

It belongs to the metallo-dependent hydrolases superfamily. TatD-type hydrolase family. The cofactor is Mn(2+). Ca(2+) serves as cofactor. Requires Mg(2+) as cofactor. It depends on Zn(2+) as a cofactor.

It is found in the nucleus. With respect to regulation, the 3'-exonuclease activity is sensitive to the metal ion present in the active site, whereas the AP endodeoxyribonuclease activity is observed in a variety of divalent metal cofactors. 3'-exoxonuclease activity is suppressed in the presence of Ca(2+), Zn(2+) and Ni(2+). Functionally, exhibits 3'-exonuclease activities and apurinic/apyrimidinic (AP) endonuclease (in vitro). Show preferential AP endonuclease activity on double-stranded DNA substrates and 3'- exonuclease activity on single-stranded DNA. In Xenopus laevis (African clawed frog), this protein is Putative deoxyribonuclease tatdn3-B (tatdn3-b).